The following is a 65-amino-acid chain: MNISDIRGLSDTEIKKKLEDSHKELFELRLKLSTRQLVNHRELPRVKNDIARILTVMRERELQIR.

It belongs to the universal ribosomal protein uL29 family.

The polypeptide is Large ribosomal subunit protein uL29 (Dehalococcoides mccartyi (strain ATCC BAA-2100 / JCM 16839 / KCTC 5957 / BAV1)).